A 106-amino-acid polypeptide reads, in one-letter code: Urease subunit beta (106 aa).

This sequence belongs to the urease beta subunit family. In terms of assembly, heterotrimer of UreA (gamma), UreB (beta) and UreC (alpha) subunits. Three heterotrimers associate to form the active enzyme.

The protein localises to the cytoplasm. The enzyme catalyses urea + 2 H2O + H(+) = hydrogencarbonate + 2 NH4(+). Its pathway is nitrogen metabolism; urea degradation; CO(2) and NH(3) from urea (urease route): step 1/1. The chain is Urease subunit beta from Alkalilimnicola ehrlichii (strain ATCC BAA-1101 / DSM 17681 / MLHE-1).